Here is a 323-residue protein sequence, read N- to C-terminus: Arginase (323 aa).

The Mn(2+) site is built by H119, D142, H144, and D146. Substrate-binding positions include 144-148 (HADIN), 155-157 (SKN), and D198. Mn(2+) is bound by residues D247 and D249. T261 and E292 together coordinate substrate.

It belongs to the arginase family. Homotrimer. Mn(2+) is required as a cofactor.

The catalysed reaction is L-arginine + H2O = urea + L-ornithine. It functions in the pathway nitrogen metabolism; urea cycle; L-ornithine and urea from L-arginine: step 1/1. The chain is Arginase (car1) from Schizosaccharomyces pombe (strain 972 / ATCC 24843) (Fission yeast).